A 123-amino-acid chain; its full sequence is Protein Wnt-7a (123 aa).

S1 is lipidated: O-palmitoleoyl serine; by PORCN. The tract at residues 33–61 (VEPVRASRNKRPTFLKIKKPLSYLKPMDT) is disordered linker. C89 and C104 form a disulfide bridge. N90 carries N-linked (GlcNAc...) asparagine glycosylation.

Belongs to the Wnt family. In terms of processing, palmitoleoylation is required for efficient binding to frizzled receptors. Depalmitoleoylation leads to Wnt signaling pathway inhibition.

It localises to the secreted. Its subcellular location is the extracellular space. It is found in the extracellular matrix. Its function is as follows. Ligand for members of the frizzled family of seven transmembrane receptors that functions in the canonical Wnt/beta-catenin signaling pathway. Plays an important role in embryonic development, including dorsal versus ventral patterning during limb development, skeleton development and urogenital tract development. Required for central nervous system (CNS) angiogenesis and blood-brain barrier regulation. In Plethodon jordani (Red-cheeked salamander), this protein is Protein Wnt-7a (WNT-7A).